Here is a 630-residue protein sequence, read N- to C-terminus: MDLTQIQNPSFLKDMSISELEGLSEDIRKFLIEELSQTGGHIAPNLGVVELTIALHKLFDSPKDKFLWDVGHQSYVHKILTGRAKEFGTLRQYQGLCGFPKRCESEHDVWETGHSSTSLSAAMGMALARDLKKTEEYVIPIIGDGALTGGMALEALNHIGHEKTDMIVILNDNEMSIAPNVGALHNVLGRLRTAGKYHWVKDELEYILKKIPAVGGKVAATAEKIKDSLKYLLVSGVFFEELGFTYLGPVDGHDYEKLFETLQYAKKTKGPVLVHVITKKGKGYKPAESDVIGTWHGTGSYKIESGDFVKPKEVAPAWSAVVSETVLKLARTDERIVAITPAMPVGSKLEKFQKEFPDRMIDVGIAEQHATTMAAGMATQGMKPFLAIYSTFLQRAYDQVVHDICRQNLNVFIGIDRSGLVGADGETHQGVFDIAFLRHLPNMVLMMPKDENEGQHLVYTAMQYEDGPIALRYARGNGLGVQMDEELKAIPIGTWETLKEGTQAAILTFGTTIPMAMEAAERLEQAGVSVKVVNARFIKPMDEAYLHELLGKNIPILTIEEACLIGGFGTGVVEFASENGYHSALIERMGIPDRFIEHGSVTKLLEEIGLTTDAVVDRIHTMIPSKQKRA.

Residues His-72 and 113–115 (GHS) contribute to the thiamine diphosphate site. Asp-144 serves as a coordination point for Mg(2+). Residues 145–146 (GA), Asn-173, Tyr-284, and Glu-367 each bind thiamine diphosphate. Residue Asn-173 coordinates Mg(2+).

The protein belongs to the transketolase family. DXPS subfamily. In terms of assembly, homodimer. Mg(2+) serves as cofactor. Thiamine diphosphate is required as a cofactor.

It catalyses the reaction D-glyceraldehyde 3-phosphate + pyruvate + H(+) = 1-deoxy-D-xylulose 5-phosphate + CO2. It participates in metabolic intermediate biosynthesis; 1-deoxy-D-xylulose 5-phosphate biosynthesis; 1-deoxy-D-xylulose 5-phosphate from D-glyceraldehyde 3-phosphate and pyruvate: step 1/1. Functionally, catalyzes the acyloin condensation reaction between C atoms 2 and 3 of pyruvate and glyceraldehyde 3-phosphate to yield 1-deoxy-D-xylulose-5-phosphate (DXP). This Bacillus mycoides (strain KBAB4) (Bacillus weihenstephanensis) protein is 1-deoxy-D-xylulose-5-phosphate synthase.